The chain runs to 197 residues: Large ribosomal subunit protein uL18 (197 aa).

Belongs to the universal ribosomal protein uL18 family. As to quaternary structure, part of the 50S ribosomal subunit. Contacts the 5S and 23S rRNAs.

In terms of biological role, this is one of the proteins that bind and probably mediate the attachment of the 5S RNA into the large ribosomal subunit, where it forms part of the central protuberance. In Sulfolobus acidocaldarius (strain ATCC 33909 / DSM 639 / JCM 8929 / NBRC 15157 / NCIMB 11770), this protein is Large ribosomal subunit protein uL18.